We begin with the raw amino-acid sequence, 494 residues long: Probable cytosol aminopeptidase (494 aa).

Mn(2+)-binding residues include Lys-260 and Asp-265. Lys-272 is an active-site residue. Asp-283, Asp-342, and Glu-344 together coordinate Mn(2+). Residue Arg-346 is part of the active site.

Belongs to the peptidase M17 family. Mn(2+) serves as cofactor.

The protein resides in the cytoplasm. It carries out the reaction Release of an N-terminal amino acid, Xaa-|-Yaa-, in which Xaa is preferably Leu, but may be other amino acids including Pro although not Arg or Lys, and Yaa may be Pro. Amino acid amides and methyl esters are also readily hydrolyzed, but rates on arylamides are exceedingly low.. The catalysed reaction is Release of an N-terminal amino acid, preferentially leucine, but not glutamic or aspartic acids.. In terms of biological role, presumably involved in the processing and regular turnover of intracellular proteins. Catalyzes the removal of unsubstituted N-terminal amino acids from various peptides. The chain is Probable cytosol aminopeptidase from Bacillus thuringiensis subsp. konkukian (strain 97-27).